The primary structure comprises 215 residues: Pyridoxine/pyridoxamine 5'-phosphate oxidase (215 aa).

Substrate contacts are provided by residues Arg-11–Tyr-14 and Lys-69. FMN is bound by residues Arg-64–Lys-69, Tyr-79–Thr-80, Lys-86, and Gln-108. Residues Tyr-126, Arg-130, and Ser-134 each coordinate substrate. Residues Gln-143 to Ser-144 and Trp-188 contribute to the FMN site. A substrate-binding site is contributed by Arg-194–His-196. Arg-198 contacts FMN.

It belongs to the pyridoxamine 5'-phosphate oxidase family. As to quaternary structure, homodimer. FMN serves as cofactor.

It carries out the reaction pyridoxamine 5'-phosphate + O2 + H2O = pyridoxal 5'-phosphate + H2O2 + NH4(+). The catalysed reaction is pyridoxine 5'-phosphate + O2 = pyridoxal 5'-phosphate + H2O2. It functions in the pathway cofactor metabolism; pyridoxal 5'-phosphate salvage; pyridoxal 5'-phosphate from pyridoxamine 5'-phosphate: step 1/1. It participates in cofactor metabolism; pyridoxal 5'-phosphate salvage; pyridoxal 5'-phosphate from pyridoxine 5'-phosphate: step 1/1. Catalyzes the oxidation of either pyridoxine 5'-phosphate (PNP) or pyridoxamine 5'-phosphate (PMP) into pyridoxal 5'-phosphate (PLP). The protein is Pyridoxine/pyridoxamine 5'-phosphate oxidase of Legionella pneumophila (strain Paris).